The sequence spans 797 residues: Protocadherin beta-11 (797 aa).

The N-terminal stretch at 1-26 is a signal peptide; it reads MENQGTRTQQIRQVLLLFVLLGMSQA. Residues 27-690 are Extracellular-facing; the sequence is GSETWSFSVA…AQADSLTVYL (664 aa). Cadherin domains follow at residues 35 to 133, 138 to 242, 247 to 347, 352 to 451, and 456 to 561; these read VAEE…SPIF, MLLE…SPEF, YEVK…APEI, ITSP…APTF, and YTLF…SPFV. Asn-418, Asn-436, Asn-487, and Asn-567 each carry an N-linked (GlcNAc...) asparagine glycan. One can recognise a Cadherin 6 domain in the interval 568-671; that stretch reads GSAPCTELVP…LVDGFSQPYL (104 aa). Residues 691–711 form a helical membrane-spanning segment; it reads VVALASVSSLFLFSVLLFVAV. At 712 to 797 the chain is on the cytoplasmic side; the sequence is RLCRRSRAAS…TFRNSFGFNF (86 aa).

The protein localises to the cell membrane. Functionally, potential calcium-dependent cell-adhesion protein. May be involved in the establishment and maintenance of specific neuronal connections in the brain. This chain is Protocadherin beta-11 (PCDHB11), found in Homo sapiens (Human).